The chain runs to 403 residues: Phosphoglycerate kinase (403 aa).

Residues 21 to 23, R36, 59 to 62, R119, and R154 contribute to the substrate site; these read DFN and HLGR. Residues K207, G299, E330, and 357-360 contribute to the ATP site; that span reads GGDA.

It belongs to the phosphoglycerate kinase family. Monomer.

It localises to the cytoplasm. The catalysed reaction is (2R)-3-phosphoglycerate + ATP = (2R)-3-phospho-glyceroyl phosphate + ADP. The protein operates within carbohydrate degradation; glycolysis; pyruvate from D-glyceraldehyde 3-phosphate: step 2/5. In Chlamydia abortus (strain DSM 27085 / S26/3) (Chlamydophila abortus), this protein is Phosphoglycerate kinase.